A 514-amino-acid chain; its full sequence is Glutamate--cysteine ligase, chloroplastic (514 aa).

Residues 1 to 55 constitute a chloroplast transit peptide; that stretch reads MALLSQAGGAYTVPSGHVSSRTGTKTVSGCVNVLRMKETYVSSYSRTLSTKSMLK. 2 cysteine pairs are disulfide-bonded: cysteine 178/cysteine 398 and cysteine 341/cysteine 356.

It belongs to the carboxylate-amine ligase family. Glutamate--cysteine ligase type 2 subfamily. In terms of assembly, homodimer or monomer when oxidized or reduced, respectively. In terms of processing, the Cys-178-Cys-398 disulfide bridge is known to modulate the enzyme activity according to the redox status. The oxidized form constitutes the active enzyme.

The protein localises to the plastid. It is found in the chloroplast. It carries out the reaction L-cysteine + L-glutamate + ATP = gamma-L-glutamyl-L-cysteine + ADP + phosphate + H(+). Its pathway is sulfur metabolism; glutathione biosynthesis; glutathione from L-cysteine and L-glutamate: step 1/2. Its function is as follows. Participates in the detoxification process. This is Glutamate--cysteine ligase, chloroplastic (GSH1) from Brassica juncea (Indian mustard).